The primary structure comprises 101 residues: UPF0134 protein MPN_675 (101 aa).

It belongs to the UPF0134 family.

This chain is UPF0134 protein MPN_675, found in Mycoplasma pneumoniae (strain ATCC 29342 / M129 / Subtype 1) (Mycoplasmoides pneumoniae).